The primary structure comprises 424 residues: MGSSSLSEDYRQCLERELRRGRAGVCGDPSLRAVLWQILVEDFDLHGALQDDALALLTDGLWGRADLAPALRGLARAFELLELAAVHLYLLPWRKEFTTIKTFSGGYVHVLKGVLSDDLLLKSFQKMGYVRRDSHRLMVTALPPACQLVQVALGCFALRLECEILGEVLAQLGTSVLPAEELLQARRASGDVASCVAWLQQRLAQDEEPPPLPPRGSPAAYRAPLDLYRDLQEDEGSEDASLYGEPSPGPDSPPAELAYRPPLWEQSAKLWGTGGRAWEPPAEELPQASSPPYGALEEGLEPEPSAFSFLSLRRELSRPGDLATPESSAAASPRRIRAEGVPASAYRSVSEPPGYQAHSCLSPGALPTLCCDTCRQLHAAHCAALPACRPGHSLRVLLGDAQRRLWLQRAQMDTLLYNSPGARP.

Disordered stretches follow at residues Glu-233 to Ala-258 and Thr-273 to Leu-300. The residue at position 327 (Ser-327) is a Phosphoserine.

Belongs to the SPATA2 family.

The chain is Spermatogenesis-associated protein 2-like protein from Homo sapiens (Human).